The chain runs to 149 residues: uncharacterized protein (149 aa).

Residues 111-140 (HKALEKATELIENEEELLKREGIKRENLKF) adopt a coiled-coil conformation.

This is an uncharacterized protein from Aquifex aeolicus (strain VF5).